Here is a 472-residue protein sequence, read N- to C-terminus: Carboxypeptidase Q (472 aa).

Positions 1–20 (MKFLIFAFFGGVHLLSLCSG) are cleaved as a signal peptide. Positions 21 to 44 (KAICKNGISKRTFEEIKEEIASCG) are excised as a propeptide. N-linked (GlcNAc...) asparagine glycans are attached at residues Asn61 and Asn179. The Zn(2+) site is built by His290 and Asp302. The active-site Nucleophile is the Glu336. Glu337 contacts Zn(2+). N-linked (GlcNAc...) asparagine glycosylation is found at Asn353 and Asn356. Asp364 provides a ligand contact to Zn(2+). The N-linked (GlcNAc...) asparagine glycan is linked to Asn396. Position 434 (His434) interacts with Zn(2+).

This sequence belongs to the peptidase M28 family. In terms of assembly, homodimer. The monomeric form is inactive while the homodimer is active. N-glycosylated. The secreted form is modified by hybrid or complex type oligosaccharide chains. As to expression, mainly detected in blood plasma. Abundant in placenta and kidney. Present at low level in muscles, liver and skin fibroblasts. Not detected in brain or white blood cells (at protein level).

It is found in the endoplasmic reticulum. Its subcellular location is the golgi apparatus. The protein resides in the lysosome. The protein localises to the secreted. In terms of biological role, carboxypeptidase that may play an important role in the hydrolysis of circulating peptides. Catalyzes the hydrolysis of dipeptides with unsubstituted terminals into amino acids. May play a role in the liberation of thyroxine hormone from its thyroglobulin (Tg) precursor. This is Carboxypeptidase Q (CPQ) from Homo sapiens (Human).